Consider the following 178-residue polypeptide: Cytidylate kinase (178 aa).

7 to 15 (GLPGTGTTT) lines the ATP pocket.

Belongs to the cytidylate kinase family. Type 2 subfamily.

It is found in the cytoplasm. The enzyme catalyses CMP + ATP = CDP + ADP. The catalysed reaction is dCMP + ATP = dCDP + ADP. In Methanococcus maripaludis (strain C5 / ATCC BAA-1333), this protein is Cytidylate kinase.